The sequence spans 380 residues: MDFNLNDEQELFVAGIRELMASENWEAYFAECDRDSVYPERFVKALADMGIDSLLIPEEHGGLEAGFVTVAAVWMELGRLGAPTYVLYQLPGGFNTFLREGTQEQIDKIMAFQGTGKQMWNSAITEPGAGSDVGSLKTTYTRKNGKVYLNGSKCFITSSAYTPYIVVMARDGASPDKPIYTEWFVDMSKPGIKVNKLEKLGLRMDSCCEINFDDVELDEKDMFGREGNGFNRVKEEFDHERFLVALTNYGTAMCAFEDAARYANQRVQFGETIGRFQLIQEKFAHMAIKLNSMKNMLLEAAWKADNGTITSGDAAMCKYFCANAAFDVVDSAMQVLGGVGIAGNHRITRFWRDLRVDRVSGGSDEMQILTLGRAVLKQYR.

This sequence belongs to the acyl-CoA dehydrogenase family. As to quaternary structure, homotetramer. FAD is required as a cofactor.

The protein localises to the cytoplasm. It catalyses the reaction 4-(trimethylamino)butanoyl-CoA + oxidized [electron-transfer flavoprotein] + H(+) = crotonobetainyl-CoA + reduced [electron-transfer flavoprotein]. It functions in the pathway amine and polyamine metabolism; carnitine metabolism. Catalyzes the reduction of crotonobetainyl-CoA to gamma-butyrobetainyl-CoA. The sequence is that of Crotonobetainyl-CoA reductase from Citrobacter koseri (strain ATCC BAA-895 / CDC 4225-83 / SGSC4696).